The chain runs to 455 residues: Bifunctional protein GlmU (455 aa).

The interval 1–228 (MYKCALVLAA…YEETIGVNSR (228 aa)) is pyrophosphorylase. Residues 8 to 11 (LAAG), Lys22, Gln73, and 78 to 79 (GT) contribute to the UDP-N-acetyl-alpha-D-glucosamine site. Position 103 (Asp103) interacts with Mg(2+). Positions 140, 154, 169, and 226 each coordinate UDP-N-acetyl-alpha-D-glucosamine. Residue Asn226 coordinates Mg(2+). The tract at residues 229–249 (VQLAEAEEILKNRINLMHMEN) is linker. The tract at residues 250–455 (GVTLIDPRTT…GWVDKKGLKK (206 aa)) is N-acetyltransferase. UDP-N-acetyl-alpha-D-glucosamine is bound by residues Arg331 and Lys349. His361 acts as the Proton acceptor in catalysis. 2 residues coordinate UDP-N-acetyl-alpha-D-glucosamine: Tyr364 and Asn375. Residues 384-385 (NY), Ala421, and Arg438 contribute to the acetyl-CoA site.

This sequence in the N-terminal section; belongs to the N-acetylglucosamine-1-phosphate uridyltransferase family. It in the C-terminal section; belongs to the transferase hexapeptide repeat family. In terms of assembly, homotrimer. Requires Mg(2+) as cofactor.

The protein resides in the cytoplasm. The enzyme catalyses alpha-D-glucosamine 1-phosphate + acetyl-CoA = N-acetyl-alpha-D-glucosamine 1-phosphate + CoA + H(+). It carries out the reaction N-acetyl-alpha-D-glucosamine 1-phosphate + UTP + H(+) = UDP-N-acetyl-alpha-D-glucosamine + diphosphate. It participates in nucleotide-sugar biosynthesis; UDP-N-acetyl-alpha-D-glucosamine biosynthesis; N-acetyl-alpha-D-glucosamine 1-phosphate from alpha-D-glucosamine 6-phosphate (route II): step 2/2. Its pathway is nucleotide-sugar biosynthesis; UDP-N-acetyl-alpha-D-glucosamine biosynthesis; UDP-N-acetyl-alpha-D-glucosamine from N-acetyl-alpha-D-glucosamine 1-phosphate: step 1/1. It functions in the pathway bacterial outer membrane biogenesis; LPS lipid A biosynthesis. In terms of biological role, catalyzes the last two sequential reactions in the de novo biosynthetic pathway for UDP-N-acetylglucosamine (UDP-GlcNAc). The C-terminal domain catalyzes the transfer of acetyl group from acetyl coenzyme A to glucosamine-1-phosphate (GlcN-1-P) to produce N-acetylglucosamine-1-phosphate (GlcNAc-1-P), which is converted into UDP-GlcNAc by the transfer of uridine 5-monophosphate (from uridine 5-triphosphate), a reaction catalyzed by the N-terminal domain. This is Bifunctional protein GlmU from Clostridium beijerinckii (strain ATCC 51743 / NCIMB 8052) (Clostridium acetobutylicum).